The following is a 135-amino-acid chain: uncharacterized protein (135 aa).

The interval M1–C75 is disordered.

This is an uncharacterized protein from Homo sapiens (Human).